The sequence spans 150 residues: Deoxyuridine 5'-triphosphate nucleotidohydrolase (150 aa).

Substrate is bound by residues 69-71, Asn82, 86-88, and Lys96; these read RSG and LID.

The protein belongs to the dUTPase family. Mg(2+) serves as cofactor.

The catalysed reaction is dUTP + H2O = dUMP + diphosphate + H(+). The protein operates within pyrimidine metabolism; dUMP biosynthesis; dUMP from dCTP (dUTP route): step 2/2. This enzyme is involved in nucleotide metabolism: it produces dUMP, the immediate precursor of thymidine nucleotides and it decreases the intracellular concentration of dUTP so that uracil cannot be incorporated into DNA. The polypeptide is Deoxyuridine 5'-triphosphate nucleotidohydrolase (Neisseria meningitidis serogroup A / serotype 4A (strain DSM 15465 / Z2491)).